We begin with the raw amino-acid sequence, 553 residues long: Phosphomethylpyrimidine synthase (553 aa).

Residues Asn-192, Met-221, Tyr-250, His-286, 306-308 (SRG), 347-350 (DGLR), and Glu-386 each bind substrate. Zn(2+) is bound at residue His-390. Tyr-413 is a substrate binding site. His-454 contributes to the Zn(2+) binding site. [4Fe-4S] cluster is bound by residues Cys-534, Cys-537, and Cys-542.

It belongs to the ThiC family. Homodimer. It depends on [4Fe-4S] cluster as a cofactor.

The enzyme catalyses 5-amino-1-(5-phospho-beta-D-ribosyl)imidazole + S-adenosyl-L-methionine = 4-amino-2-methyl-5-(phosphooxymethyl)pyrimidine + CO + 5'-deoxyadenosine + formate + L-methionine + 3 H(+). It functions in the pathway cofactor biosynthesis; thiamine diphosphate biosynthesis. Functionally, catalyzes the synthesis of the hydroxymethylpyrimidine phosphate (HMP-P) moiety of thiamine from aminoimidazole ribotide (AIR) in a radical S-adenosyl-L-methionine (SAM)-dependent reaction. The chain is Phosphomethylpyrimidine synthase from Anaplasma marginale (strain St. Maries).